Here is a 124-residue protein sequence, read N- to C-terminus: Small ribosomal subunit protein uS12 (124 aa).

Position 89 is a 3-methylthioaspartic acid (Asp-89). Positions 103 to 124 are disordered; sequence DTAGVKDRRQGRSKYGAKRPKD. Basic residues predominate over residues 113-124; it reads GRSKYGAKRPKD.

This sequence belongs to the universal ribosomal protein uS12 family. As to quaternary structure, part of the 30S ribosomal subunit. Contacts proteins S8 and S17. May interact with IF1 in the 30S initiation complex.

In terms of biological role, with S4 and S5 plays an important role in translational accuracy. Interacts with and stabilizes bases of the 16S rRNA that are involved in tRNA selection in the A site and with the mRNA backbone. Located at the interface of the 30S and 50S subunits, it traverses the body of the 30S subunit contacting proteins on the other side and probably holding the rRNA structure together. The combined cluster of proteins S8, S12 and S17 appears to hold together the shoulder and platform of the 30S subunit. This is Small ribosomal subunit protein uS12 from Acaryochloris marina (strain MBIC 11017).